The chain runs to 556 residues: tRNA (guanine(37)-N(1))-methyltransferase (556 aa).

The N-terminal 30 residues, 1–30, are a transit peptide targeting the mitochondrion; it reads MIITTKALTVLPHSGLRTTHRSLLARLRHY. Residues His-249, 287–288, 315–316, and Asn-346 contribute to the S-adenosyl-L-methionine site; these read DL and DA. 2 disordered regions span residues 444–465 and 524–556; these read QHEEEDLPQLEEAKRPSNKMKD and KKAAKPAPKPLPAKNKSKPDTKKIEADLNEMQM. Composition is skewed to basic and acidic residues over residues 454-465 and 540-549; these read EEAKRPSNKMKD and SKPDTKKIEA.

Belongs to the class I-like SAM-binding methyltransferase superfamily. TRM5/TYW2 family. In terms of assembly, monomer.

Its subcellular location is the mitochondrion matrix. It is found in the nucleus. It localises to the cytoplasm. It catalyses the reaction guanosine(37) in tRNA + S-adenosyl-L-methionine = N(1)-methylguanosine(37) in tRNA + S-adenosyl-L-homocysteine + H(+). Functionally, specifically methylates the N1 position of guanosine-37 in various cytoplasmic and mitochondrial tRNAs. Methylation is not dependent on the nature of the nucleoside 5' of the target nucleoside. This is the first step in the biosynthesis of wybutosine (yW), a modified base adjacent to the anticodon of tRNAs and required for accurate decoding. This is tRNA (guanine(37)-N(1))-methyltransferase from Anopheles gambiae (African malaria mosquito).